Here is a 440-residue protein sequence, read N- to C-terminus: MDQLAHHYRAHIAELNRRVAEILSREALSGLVIHSGQPHRMFLDDINYPFKANPHFKAWLPVLDNPNCWLVVNGRDKPQLIFYRPVDFWHKVSDVPDMFWTEYFDIKLLTKADKVAEFLPTDIANWAYLGEHLDVAEVLGFTSRNPDAVMSYLHYHRTTKTEYELECMRRANQIAVQGHLAAKNAFYNGASEFEIQQHYLSAVGQSENEVPYGNIIALNQNAAILHYTALEHQSPAKRLSFLIDAGASYFGYASDITRTYAFEKNRFDELITAMNKAQLELIDMMRPGVRYPDLHLATHAKVAQMLLDFDLATGDAQGLVDQGITSAFFPHGLGHMLGLQVHDVGGFSHDERGTHIAAPEAHPFLRCTRILAPNQVLTMEPGLYIIDTLLNELKQDSRGQQINWQTVDELRPFGGIRIEDNVIVHQDRNENMTRELGLTD.

Mn(2+) is bound by residues D244, D255, H335, E380, and E419.

This sequence belongs to the peptidase M24B family. Bacterial-type prolidase subfamily. Requires Mn(2+) as cofactor.

The enzyme catalyses Xaa-L-Pro dipeptide + H2O = an L-alpha-amino acid + L-proline. Its function is as follows. Splits dipeptides with a prolyl residue in the C-terminal position. This Shewanella baltica (strain OS185) protein is Xaa-Pro dipeptidase.